A 272-amino-acid polypeptide reads, in one-letter code: MARLAAFDMDGTLLMPDHHLGEKTLSTLARLRERDITLTFATGRHVLEMQHILGALSLDAYLITGNGTRVHSLEGELLHRDDLPADVAELVLYQQWDTRASMHIFNDDGWFTGKEIPALLQAFVYSGFRYQIIDVKKMPLDRVTKICFCGDHDDLTRLQIQLHEALGERAHLCFSATDCLEVLPVGCNKGAALTVLTQHLGLSLRDCMAFGDAMNDREMLGSVGSGFIMGNAMPQLRAELPHLPVIGHCRNQAVSHYLTHWLDNPHLPYSPE.

Catalysis depends on D8, which acts as the Nucleophile. Mg(2+) contacts are provided by D8, D10, and D212.

The protein belongs to the HAD-like hydrolase superfamily. Cof family. It depends on Mg(2+) as a cofactor.

The catalysed reaction is 4-amino-2-methyl-5-(diphosphooxymethyl)pyrimidine + H2O = 4-amino-2-methyl-5-(phosphooxymethyl)pyrimidine + phosphate + H(+). Functionally, catalyzes the hydrolysis of 4-amino-2-methyl-5-hydroxymethylpyrimidine pyrophosphate (HMP-PP) to 4-amino-2-methyl-5-hydroxymethylpyrimidine phosphate (HMP-P). In Escherichia fergusonii (strain ATCC 35469 / DSM 13698 / CCUG 18766 / IAM 14443 / JCM 21226 / LMG 7866 / NBRC 102419 / NCTC 12128 / CDC 0568-73), this protein is HMP-PP phosphatase.